The chain runs to 488 residues: Centrosomal protein cep57l1 (488 aa).

Residues 71-226 (LESEKTHARD…AQVQTSLEVN (156 aa)) adopt a coiled-coil conformation. 2 disordered regions span residues 232-272 (SASS…PPSK) and 311-342 (PRVS…LMSS). Residues 241–250 (RKVKKKKQSK) are compositionally biased toward basic residues. Basic and acidic residues-rich tracts occupy residues 259–270 (PSSKEPLSKEPP) and 314–325 (SQKDPKTVEHKP). Residues 377–403 (KNTDMREDLERELDYLVKQMEIKSDQI) are a coiled coil. The segment at 416–464 (LKKTAKKQPRPPSTTKPAEDEQNIGATDPCTPRNKGNLANGTGTPNSKA) is disordered. Positions 452-464 (NLANGTGTPNSKA) are enriched in polar residues.

It belongs to the translokin family. Interacts with clip1, mis12, ndc80 and zwint. Interacts with gamma-tubulin.

The protein localises to the cytoplasm. Its subcellular location is the cytoskeleton. The protein resides in the microtubule organizing center. It is found in the centrosome. It localises to the chromosome. The protein localises to the centromere. Its subcellular location is the kinetochore. The protein resides in the spindle. Its function is as follows. Required for spindle microtubule attachment to both kinetochores and centrosomes. Also functions to tether minus-ends of spindle microtubules to centrosomes. May act by forming ring-like structures around microtubules, or by serving as a cross-linker or scaffold at the attachment site. The sequence is that of Centrosomal protein cep57l1 (cep57l1) from Xenopus laevis (African clawed frog).